The primary structure comprises 188 residues: F-box only protein 36 (188 aa).

Residues 91-137 (FDFLERLSDDLLLNIISYLDLEDIARLCQTSHRFAKLCMSDKLWEQI) form the F-box domain.

In terms of assembly, directly interacts with SKP1 and CUL1.

In terms of biological role, substrate-recognition component of the SCF (SKP1-CUL1-F-box protein)-type E3 ubiquitin ligase complex. In Pongo abelii (Sumatran orangutan), this protein is F-box only protein 36 (FBXO36).